The chain runs to 294 residues: Cytidine deaminase (294 aa).

2 CMP/dCMP-type deaminase domains span residues 48 to 168 (DDDA…FGPR) and 186 to 294 (LKGD…VTLA). 89-91 (NME) contributes to the substrate binding site. His-102 is a binding site for Zn(2+). The Proton donor role is filled by Glu-104. Residues Cys-129 and Cys-132 each contribute to the Zn(2+) site.

Belongs to the cytidine and deoxycytidylate deaminase family. Homodimer. It depends on Zn(2+) as a cofactor.

The catalysed reaction is cytidine + H2O + H(+) = uridine + NH4(+). It catalyses the reaction 2'-deoxycytidine + H2O + H(+) = 2'-deoxyuridine + NH4(+). In terms of biological role, this enzyme scavenges exogenous and endogenous cytidine and 2'-deoxycytidine for UMP synthesis. The chain is Cytidine deaminase from Cronobacter sakazakii (strain ATCC BAA-894) (Enterobacter sakazakii).